We begin with the raw amino-acid sequence, 469 residues long: Glutamine synthetase (469 aa).

The region spanning 14 to 98 (NDVKYVDLRF…ITCDVLEPTT (85 aa)) is the GS beta-grasp domain. Positions 106–469 (PRGIAKKAEA…PVEFDMYYSG (364 aa)) constitute a GS catalytic domain. Residues E131 and E133 each coordinate Mg(2+). Residue E209 participates in ATP binding. Mg(2+) contacts are provided by E214 and E221. Residues 265 to 266 (NG) and G266 contribute to the L-glutamate site. Residue H270 participates in Mg(2+) binding. ATP-binding positions include 272-274 (HQS) and S274. L-glutamate contacts are provided by R322, E328, and R340. R340, R345, and K353 together coordinate ATP. E358 lines the Mg(2+) pocket. An L-glutamate-binding site is contributed by R360. An O-AMP-tyrosine modification is found at Y398.

Belongs to the glutamine synthetase family. Oligomer of 12 subunits arranged in the form of two hexameric ring. Mg(2+) is required as a cofactor.

The protein localises to the cytoplasm. It carries out the reaction L-glutamate + NH4(+) + ATP = L-glutamine + ADP + phosphate + H(+). With respect to regulation, the activity of this enzyme could be controlled by adenylation under conditions of abundant glutamine. In terms of biological role, catalyzes the ATP-dependent biosynthesis of glutamine from glutamate and ammonia. This is Glutamine synthetase from Bradyrhizobium diazoefficiens (strain JCM 10833 / BCRC 13528 / IAM 13628 / NBRC 14792 / USDA 110).